Reading from the N-terminus, the 487-residue chain is Glutamyl-tRNA(Gln) amidotransferase subunit A (487 aa).

Catalysis depends on charge relay system residues Lys79 and Ser158. Ser182 acts as the Acyl-ester intermediate in catalysis.

It belongs to the amidase family. GatA subfamily. In terms of assembly, heterotrimer of A, B and C subunits.

The catalysed reaction is L-glutamyl-tRNA(Gln) + L-glutamine + ATP + H2O = L-glutaminyl-tRNA(Gln) + L-glutamate + ADP + phosphate + H(+). In terms of biological role, allows the formation of correctly charged Gln-tRNA(Gln) through the transamidation of misacylated Glu-tRNA(Gln) in organisms which lack glutaminyl-tRNA synthetase. The reaction takes place in the presence of glutamine and ATP through an activated gamma-phospho-Glu-tRNA(Gln). This Ehrlichia ruminantium (strain Gardel) protein is Glutamyl-tRNA(Gln) amidotransferase subunit A.